The primary structure comprises 150 residues: UPF0208 membrane protein VIBHAR_02941 (150 aa).

2 helical membrane passes run 42 to 62 (FGIKVMPAVAAISVLTQMAFN) and 70 to 90 (AIVVALFAISMPLQGMWWLGS).

Belongs to the UPF0208 family.

Its subcellular location is the cell inner membrane. This Vibrio campbellii (strain ATCC BAA-1116) protein is UPF0208 membrane protein VIBHAR_02941.